Reading from the N-terminus, the 472-residue chain is Cysteine--tRNA ligase (472 aa).

Position 27 (Cys-27) interacts with Zn(2+). The 'HIGH' region motif lies at 29–39; it reads PTVYNLIHIGN. Zn(2+) contacts are provided by Cys-214, His-239, and Glu-243. A 'KMSKS' region motif is present at residues 271 to 275; the sequence is KMSKS. Lys-274 contributes to the ATP binding site.

Belongs to the class-I aminoacyl-tRNA synthetase family. In terms of assembly, monomer. It depends on Zn(2+) as a cofactor.

The protein resides in the cytoplasm. It carries out the reaction tRNA(Cys) + L-cysteine + ATP = L-cysteinyl-tRNA(Cys) + AMP + diphosphate. In Lachnospira eligens (strain ATCC 27750 / DSM 3376 / VPI C15-48 / C15-B4) (Eubacterium eligens), this protein is Cysteine--tRNA ligase.